Here is a 34-residue protein sequence, read N- to C-terminus: Delta-conotoxin AtVIA (34 aa).

Positions 1-4 (LSKK) are excised as a propeptide. Q5 is modified (pyrrolidone carboxylic acid). Disulfide bonds link C6-C23, C13-C27, and C22-C31.

As to expression, expressed by the venom duct.

It localises to the secreted. Functionally, probable toxin from a worm-hunter cone snail. Shows an excitatory activity on a majority of mouse lumbar dorsal root ganglion (DRG) neurons. Very probably inhibits the inactivation of voltage-gated sodium channels (Nav). This chain is Delta-conotoxin AtVIA, found in Conus ateralbus (Cone snail).